A 663-amino-acid chain; its full sequence is UvrABC system protein B (663 aa).

The span at 1-10 (MIDKRDDKPF) shows a compositional bias: basic and acidic residues. The tract at residues 1–23 (MIDKRDDKPFKLKSKYKPSGDQP) is disordered. The Helicase ATP-binding domain occupies 31 to 418 (DNIEGGEKAQ…TNTIIEQIIR (388 aa)). Position 44–51 (44–51 (GATGTGKT)) interacts with ATP. A Beta-hairpin motif is present at residues 97–120 (YYDYYQPEAYVPSSDTYIEKDSSV). The Helicase C-terminal domain maps to 435 to 597 (QMDDLLGEIN…IVPQTIKKDI (163 aa)). One can recognise a UVR domain in the interval 627–662 (KEAINALQKQMQEAAELLDFELAAQMRDLILELKLM).

This sequence belongs to the UvrB family. As to quaternary structure, forms a heterotetramer with UvrA during the search for lesions. Interacts with UvrC in an incision complex.

The protein resides in the cytoplasm. Its function is as follows. The UvrABC repair system catalyzes the recognition and processing of DNA lesions. A damage recognition complex composed of 2 UvrA and 2 UvrB subunits scans DNA for abnormalities. Upon binding of the UvrA(2)B(2) complex to a putative damaged site, the DNA wraps around one UvrB monomer. DNA wrap is dependent on ATP binding by UvrB and probably causes local melting of the DNA helix, facilitating insertion of UvrB beta-hairpin between the DNA strands. Then UvrB probes one DNA strand for the presence of a lesion. If a lesion is found the UvrA subunits dissociate and the UvrB-DNA preincision complex is formed. This complex is subsequently bound by UvrC and the second UvrB is released. If no lesion is found, the DNA wraps around the other UvrB subunit that will check the other stand for damage. The sequence is that of UvrABC system protein B from Streptococcus pyogenes serotype M18 (strain MGAS8232).